A 296-amino-acid chain; its full sequence is 4-hydroxybenzoate octaprenyltransferase (296 aa).

Transmembrane regions (helical) follow at residues 22–42 (PIGI…SALG), 46–66 (WIVV…GCVI), 99–121 (LFAG…LVIW), 139–159 (FFAI…PMAY), 163–183 (LGEV…WAVA), 211–231 (FDVA…GGIG), 238–258 (PAFY…YTWI), and 270–290 (FLHN…DFLV).

It belongs to the UbiA prenyltransferase family. Mg(2+) serves as cofactor.

The protein localises to the cell inner membrane. It carries out the reaction all-trans-octaprenyl diphosphate + 4-hydroxybenzoate = 4-hydroxy-3-(all-trans-octaprenyl)benzoate + diphosphate. The protein operates within cofactor biosynthesis; ubiquinone biosynthesis. Catalyzes the prenylation of para-hydroxybenzoate (PHB) with an all-trans polyprenyl group. Mediates the second step in the final reaction sequence of ubiquinone-8 (UQ-8) biosynthesis, which is the condensation of the polyisoprenoid side chain with PHB, generating the first membrane-bound Q intermediate 3-octaprenyl-4-hydroxybenzoate. This Dechloromonas aromatica (strain RCB) protein is 4-hydroxybenzoate octaprenyltransferase.